The sequence spans 548 residues: C2H2-type transcription factor MSN2 (548 aa).

2 C2H2-type zinc fingers span residues 420-448 (FKCELCDRRFRRQEHLKRHYRSLHTQDKP) and 449-471 (FECNECGKKFSRSDNLTQHARTH).

Interacts with HOG1/OSM1.

The protein resides in the nucleus. Its subcellular location is the cytoplasm. Functionally, transcription factor that acts as a key downstream transcription factor in the HOG1-MAPK pathway. Regulates the expression of a series of downstream genes and controls vegetative growth, conidiogenesis, cell wall integrity, stress response, mitochondrial morphology, and pathogenicity. Binds to a putative promoter region 1500 bp upstream of the start codons of the target genes MGG_07019, POX1 and DCI1. Binds to the AGGGG and CCCCT motif of the COS1 promoter region. Involved in fatty acid beta-oxidation by directly regulating the expression of the dienoyl-CoA isomerase DCI1, thereby facilitating invasive hyphal growth during the early infection stage. Targets also the 3-methylglutaconyl-CoA hydratase-encoding gene (AUH1) to control mitochondrial morphology and mitophagy, which are critical for the infectious growth of the pathogen. The polypeptide is C2H2-type transcription factor MSN2 (Pyricularia oryzae (strain 70-15 / ATCC MYA-4617 / FGSC 8958) (Rice blast fungus)).